We begin with the raw amino-acid sequence, 226 residues long: UPF0758 protein Sca_1264 (226 aa).

The MPN domain occupies 102–224; sequence KITSPQDAAD…YLSMVEGGYF (123 aa). His-173, His-175, and Asp-186 together coordinate Zn(2+). The JAMM motif signature appears at 173-186; it reads HNHPSGDVTPSKED.

Belongs to the UPF0758 family.

In Staphylococcus carnosus (strain TM300), this protein is UPF0758 protein Sca_1264.